A 540-amino-acid chain; its full sequence is Chaperonin GroEL (540 aa).

Residues 29–32 (TLGP), 86–90 (DGTTT), glycine 413, 476–478 (NAA), and aspartate 492 each bind ATP.

Belongs to the chaperonin (HSP60) family. As to quaternary structure, forms a cylinder of 14 subunits composed of two heptameric rings stacked back-to-back. Interacts with the co-chaperonin GroES.

The protein resides in the cytoplasm. It catalyses the reaction ATP + H2O + a folded polypeptide = ADP + phosphate + an unfolded polypeptide.. Its function is as follows. Together with its co-chaperonin GroES, plays an essential role in assisting protein folding. The GroEL-GroES system forms a nano-cage that allows encapsulation of the non-native substrate proteins and provides a physical environment optimized to promote and accelerate protein folding. This chain is Chaperonin GroEL, found in Streptococcus pneumoniae (strain P1031).